Reading from the N-terminus, the 110-residue chain is DNA-binding protein Tneu_1679 (110 aa).

This sequence belongs to the PDCD5 family.

The chain is DNA-binding protein Tneu_1679 from Pyrobaculum neutrophilum (strain DSM 2338 / JCM 9278 / NBRC 100436 / V24Sta) (Thermoproteus neutrophilus).